The sequence spans 376 residues: Ribonuclease D (376 aa).

In terms of domain architecture, 3'-5' exonuclease spans isoleucine 8–serine 176. An HRDC domain is found at arginine 214–glutamate 294.

Belongs to the RNase D family. A divalent metal cation serves as cofactor.

It localises to the cytoplasm. It carries out the reaction Exonucleolytic cleavage that removes extra residues from the 3'-terminus of tRNA to produce 5'-mononucleotides.. Its function is as follows. Exonuclease involved in the 3' processing of various precursor tRNAs. Initiates hydrolysis at the 3'-terminus of an RNA molecule and releases 5'-mononucleotides. This Pseudomonas paraeruginosa (strain DSM 24068 / PA7) (Pseudomonas aeruginosa (strain PA7)) protein is Ribonuclease D.